The following is a 289-amino-acid chain: Glycine--tRNA ligase alpha subunit (289 aa).

This sequence belongs to the class-II aminoacyl-tRNA synthetase family. Tetramer of two alpha and two beta subunits.

The protein localises to the cytoplasm. The enzyme catalyses tRNA(Gly) + glycine + ATP = glycyl-tRNA(Gly) + AMP + diphosphate. This chain is Glycine--tRNA ligase alpha subunit (glyQ), found in Rickettsia prowazekii (strain Madrid E).